The chain runs to 324 residues: Homeobox protein engrailed-2 (324 aa).

3 disordered regions span residues 1–59 (MEEK…HQHP), 89–174 (GGAR…VLKA), and 215–240 (DRPS…RPRT). The segment covering 89 to 110 (GGARGGEGGAGTTEGGGGGAGG) has biased composition (gly residues). The segment at residues 235-294 (DKRPRTAFTAEQLQRLKAEFQTNRYLTEQRRQSLAQELSLNESQIKIWFQNKRAKIKKAT) is a DNA-binding region (homeobox).

The protein belongs to the engrailed homeobox family. Cerebellar granule cells.

The protein localises to the nucleus. The protein is Homeobox protein engrailed-2 (En2) of Mus musculus (Mouse).